The following is a 437-amino-acid chain: Adenylosuccinate synthetase (437 aa).

GTP-binding positions include 12–18 (GDEGKGK) and 40–42 (GHT). Residue Asp13 is the Proton acceptor of the active site. Asp13 and Gly40 together coordinate Mg(2+). IMP contacts are provided by residues 13 to 16 (DEGK), 38 to 41 (NAGH), Thr131, Arg145, Gln225, and Thr240. The active-site Proton donor is the His41. Residues 281–304 (TELLGADGKPDADGERLGTRGHEF) are disordered. Residues 288 to 303 (GKPDADGERLGTRGHE) are compositionally biased toward basic and acidic residues. A substrate-binding site is contributed by 306-312 (TTTGRQR). Residue Arg310 participates in IMP binding. Residues Arg312, 338 to 340 (KLD), and 420 to 422 (STS) each bind GTP.

Belongs to the adenylosuccinate synthetase family. As to quaternary structure, homodimer. It depends on Mg(2+) as a cofactor.

It is found in the cytoplasm. The catalysed reaction is IMP + L-aspartate + GTP = N(6)-(1,2-dicarboxyethyl)-AMP + GDP + phosphate + 2 H(+). The protein operates within purine metabolism; AMP biosynthesis via de novo pathway; AMP from IMP: step 1/2. In terms of biological role, plays an important role in the de novo pathway of purine nucleotide biosynthesis. Catalyzes the first committed step in the biosynthesis of AMP from IMP. This Ruegeria sp. (strain TM1040) (Silicibacter sp.) protein is Adenylosuccinate synthetase.